We begin with the raw amino-acid sequence, 482 residues long: MGDYNMNEFAYGNLYDDDDGDVGGSSKEGNNSIQKVSMLPLVFLIFYEVSGGPFGAEGSVNAAGPLLALLGFVIFPFIWCIPEALITAEMSTMFPINGGFVVWVSSALGTFWGFQVGWMKWLCGVIDNALYPVLFLDYLKSAVPALATGLPRVASILILTLLLTYLNYRGLTIVGWTAVFMGVFSMLPFAVMSLVSIPQLEPSRWLVMDLGNVNWNLYLNTLLWNLNYWDSVSTLAGEVANPKKTLPKALCYGVIFVALSNFLPLLSGTGAIPLDRELWTDGYLAEVAKAIGGGWLQLWVQAAAATSNMGMFLAEMSSDSFQLLGMAELGILPEIFAQRSRYGTPLLGILFSASGVLLLSGLSFQEIIAAENLLYCGGMILEFIAFVRLRKKHPAASRPYKIPVGTVGSILICVPPIVLICLVIVLSTIKVALVSFVMVVIGFLMKPCLNHMDGKKWVKFSVCSDLAEFQKENLDCEESLLR.

11 helical membrane passes run 36 to 56 (VSML…PFGA), 66 to 86 (LLAL…EALI), 94 to 114 (FPIN…FWGF), 143 to 163 (VPAL…TLLL), 171 to 191 (LTIV…PFAV), 254 to 274 (VIFV…AIPL), 294 to 314 (GWLQ…MFLA), 344 to 364 (TPLL…GLSF), 367 to 387 (IIAA…IAFV), 406 to 426 (TVGS…VIVL), and 429 to 449 (IKVA…KPCL).

Belongs to the amino acid-polyamine-organocation (APC) superfamily. Polyamine:cation symporter (PHS) (TC 2.A.3.12) family.

It localises to the cell membrane. Probable cell membrane polyamine/proton symporter involved in the polyamine uptake in cells. The protein is Probable polyamine transporter At1g31820 of Arabidopsis thaliana (Mouse-ear cress).